Here is a 163-residue protein sequence, read N- to C-terminus: MADPSFDVVSKIDRQEVDNALNQAAKELANRFDFRGTGTRIQWSGEEAITLESETEERCKAAIDVFKEKLIKRGISLKAFDVGEPASSGRVYKVTGKLVQGIAQDVAKKISKKIRDEGPKGVQAQIQGDQLRVSGKKKDDLQTVIQLLKSSDFDVALQFENYR.

The protein belongs to the YajQ family.

Functionally, nucleotide-binding protein. The sequence is that of Nucleotide-binding protein SACE_6882 from Saccharopolyspora erythraea (strain ATCC 11635 / DSM 40517 / JCM 4748 / NBRC 13426 / NCIMB 8594 / NRRL 2338).